Here is a 1154-residue protein sequence, read N- to C-terminus: Large proline-rich protein BAG6 (1154 aa).

At Met-1 the chain carries N-acetylmethionine. The Ubiquitin-like domain occupies 17 to 92 (LEVLVKTLDS…HLVERAPPQT (76 aa)). Disordered stretches follow at residues 87–125 (RAPP…ASVH), 186–274 (RGGT…HPSP), 387–442 (TMTG…SSHP), 463–531 (QDSG…QGAG), and 568–626 (AQAQ…SAAD). Ser-96 carries the phosphoserine modification. The segment covering 96–112 (SGASSGTGSASATHGGA) has biased composition (low complexity). Thr-117 carries the post-translational modification Phosphothreonine. Polar residues predominate over residues 209–218 (VALNSQTSEP). The stretch at 237–271 (RPPTQTPELAPSGPAPAGPAPAGPAPAPETNAPNH) is repeat 1. The tract at residues 237-658 (RPPTQTPELA…MASPTITVAM (422 aa)) is 4 X 29 AA approximate repeats. The span at 249–263 (GPAPAGPAPAGPAPA) shows a compositional bias: pro residues. Low complexity predominate over residues 400–409 (GAEAATPGSA). A compositionally biased stretch (polar residues) spans 410–426 (QATSLPPSSTTVDSSTE). The stretch at 416–444 (PSSTTVDSSTEGAPPPGPAPPPASSHPRV) is repeat 2. Pro residues-rich tracts occupy residues 428–439 (APPPGPAPPPAS) and 508–521 (PTPP…PGGP). Composition is skewed to low complexity over residues 568–581 (AQAQ…AQAP) and 591–609 (PATA…TAGP). A run of 2 repeats spans residues 597–624 (SAGT…QPSA) and 630–658 (SQLL…TVAM). The segment covering 611–622 (PGGPAQPPPPQP) has biased composition (pro residues). Disordered regions lie at residues 673-719 (QASQ…ESLP) and 968-1154 (PPQT…ADDP). Pro residues predominate over residues 678 to 702 (APPPPPPPPPPPPAPEQQSTPPPGS). Phosphoserine occurs at positions 986 and 995. Positions 1029 to 1042 (AEPWAAAVPPEWVP) are enriched in low complexity. The required for interaction with GET4 stretch occupies residues 1032–1062 (WAAAVPPEWVPIIQQDIQSQRKVKPQPPLSD). The Nuclear localization site motif lies at 1034 to 1076 (AAVPPEWVPIIQQDIQSQRKVKPQPPLSDAYLSGMPAKRRKTM). Positions 1044–1154 (IQQDIQSQRK…NAHRAFADDP (111 aa)) are sufficient for the delivery of client proteins to the endoplasmic reticulum. Phosphothreonine is present on Thr-1075. The segment at 1080 to 1137 (GPQLLLSEAVSRAAKAAGARPLTSPESLSRDLEAPEVQESYRQQLRSDIQKRLQEDPN) is BAG-similar domain, required and sufficient for interaction with UBL4A. The segment covering 1088 to 1098 (AVSRAAKAAGA) has biased composition (low complexity). Phosphoserine occurs at positions 1103 and 1139.

In terms of assembly, component of the BAG6/BAT3 complex, also named BAT3 complex, at least composed of BAG6, UBL4A and GET4/TRC35. Interacts with GET4; the interaction is direct and localizes BAG6 in the cytosol. Interacts with UBL4A; the interaction is direct and required for UBL4A protein stability. Interacts with AIFM1. Interacts with HSPA2. Interacts with CTCFL. Interacts with p300/EP300. Interacts (via ubiquitin-like domain) with RNF126; required for BAG6-dependent ubiquitination of proteins mislocalized to the cytosol. Interacts (via ubiquitin-like domain) with SGTA; SGTA competes with RNF126 by binding the same region of BAG6, thereby promoting deubiquitination of BAG6-target proteins and rescuing them from degradation. Interacts with ricin A chain. Interacts with VCP and AMFR; both form the VCP/p97-AMFR/gp78 complex. Interacts with SYVN1. Interacts with USP13; the interaction is direct and may mediate UBL4A deubiquitination. Interacts with ZFAND2B. Interacts with KPNA2. Interacts with UBQLN4. In terms of processing, ricin can induce a cleavage by the caspase CASP3. The released C-terminal peptide induces apoptosis.

It is found in the cytoplasm. Its subcellular location is the cytosol. The protein localises to the nucleus. The protein resides in the secreted. It localises to the extracellular exosome. Functionally, ATP-independent molecular chaperone preventing the aggregation of misfolded and hydrophobic patches-containing proteins. Functions as part of a cytosolic protein quality control complex, the BAG6/BAT3 complex, which maintains these client proteins in a soluble state and participates in their proper delivery to the endoplasmic reticulum or alternatively can promote their sorting to the proteasome where they undergo degradation. The BAG6/BAT3 complex is involved in the post-translational delivery of tail-anchored/type II transmembrane proteins to the endoplasmic reticulum membrane. Recruited to ribosomes, it interacts with the transmembrane region of newly synthesized tail-anchored proteins and together with SGTA and ASNA1 mediates their delivery to the endoplasmic reticulum. Client proteins that cannot be properly delivered to the endoplasmic reticulum are ubiquitinated by RNF126, an E3 ubiquitin-protein ligase associated with BAG6 and are sorted to the proteasome. SGTA which prevents the recruitment of RNF126 to BAG6 may negatively regulate the ubiquitination and the proteasomal degradation of client proteins. Similarly, the BAG6/BAT3 complex also functions as a sorting platform for proteins of the secretory pathway that are mislocalized to the cytosol either delivering them to the proteasome for degradation or to the endoplasmic reticulum. The BAG6/BAT3 complex also plays a role in the endoplasmic reticulum-associated degradation (ERAD), a quality control mechanism that eliminates unwanted proteins of the endoplasmic reticulum through their retrotranslocation to the cytosol and their targeting to the proteasome. It maintains these retrotranslocated proteins in an unfolded yet soluble state condition in the cytosol to ensure their proper delivery to the proteasome. BAG6 is also required for selective ubiquitin-mediated degradation of defective nascent chain polypeptides by the proteasome. In this context, it may participate in the production of antigenic peptides and play a role in antigen presentation in immune response. BAG6 is also involved in endoplasmic reticulum stress-induced pre-emptive quality control, a mechanism that selectively attenuates the translocation of newly synthesized proteins into the endoplasmic reticulum and reroutes them to the cytosol for proteasomal degradation. BAG6 may ensure the proper degradation of these proteins and thereby protects the endoplasmic reticulum from protein overload upon stress. By inhibiting the polyubiquitination and subsequent proteasomal degradation of HSPA2 it may also play a role in the assembly of the synaptonemal complex during spermatogenesis. Also positively regulates apoptosis by interacting with and stabilizing the proapoptotic factor AIFM1. By controlling the steady-state expression of the IGF1R receptor, indirectly regulates the insulin-like growth factor receptor signaling pathway. Its function is as follows. Involved in DNA damage-induced apoptosis: following DNA damage, accumulates in the nucleus and forms a complex with p300/EP300, enhancing p300/EP300-mediated p53/TP53 acetylation leading to increase p53/TP53 transcriptional activity. When nuclear, may also act as a component of some chromatin regulator complex that regulates histone 3 'Lys-4' dimethylation (H3K4me2). In terms of biological role, released extracellularly via exosomes, it is a ligand of the natural killer/NK cells receptor NCR3 and stimulates NK cells cytotoxicity. It may thereby trigger NK cells cytotoxicity against neighboring tumor cells and immature myeloid dendritic cells (DC). May mediate ricin-induced apoptosis. This is Large proline-rich protein BAG6 from Mus musculus (Mouse).